The primary structure comprises 219 residues: Probable GTP-binding protein EngB (219 aa).

Residues 24–207 form the EngB-type G domain; that stretch reads VQPEIAFAGR…HALIESWLRP (184 aa). GTP contacts are provided by residues 32-39, 59-63, 81-84, 148-151, and 185-188; these read GRSNAGKS, GRTQH, DLPG, TKCD, and LFSA. Mg(2+) contacts are provided by Ser39 and Thr61.

This sequence belongs to the TRAFAC class TrmE-Era-EngA-EngB-Septin-like GTPase superfamily. EngB GTPase family. Mg(2+) is required as a cofactor.

Its function is as follows. Necessary for normal cell division and for the maintenance of normal septation. This is Probable GTP-binding protein EngB from Burkholderia thailandensis (strain ATCC 700388 / DSM 13276 / CCUG 48851 / CIP 106301 / E264).